Consider the following 95-residue polypeptide: Protein TusB (95 aa).

The protein belongs to the DsrH/TusB family. Heterohexamer, formed by a dimer of trimers. The hexameric TusBCD complex contains 2 copies each of TusB, TusC and TusD. The TusBCD complex interacts with TusE.

It is found in the cytoplasm. Its function is as follows. Part of a sulfur-relay system required for 2-thiolation of 5-methylaminomethyl-2-thiouridine (mnm(5)s(2)U) at tRNA wobble positions. In Buchnera aphidicola subsp. Baizongia pistaciae (strain Bp), this protein is Protein TusB.